Here is a 221-residue protein sequence, read N- to C-terminus: MSDENLLTTLDTYLASGIHIGTQQKTEDMRRFIYRVRADGLYVLDVRKTDERLRLAAKFLSNYEPEDIMAVTRRVYSVGPLKKFGQVTGINTVAGRFVPGTLTNPSAKKFAEPEVLFLSDPRVDKQALKEAIEIGIPVVGMCDTEHLTAHIDFIIPTNNKGRKSVSLMYYLIAREYMKNRGLIGEEVPFSYDDFLEKAMNVKVKMNTAPRQRGRFQRRPRR.

Belongs to the universal ribosomal protein uS2 family.

The polypeptide is Small ribosomal subunit protein uS2 (Methanococcus maripaludis (strain C6 / ATCC BAA-1332)).